A 530-amino-acid polypeptide reads, in one-letter code: Bifunctional purine biosynthesis protein PurH (530 aa).

The 148-residue stretch at 1–148 (MENSRPIKRA…KNHKDVGIVV (148 aa)) folds into the MGS-like domain.

The protein belongs to the PurH family.

It carries out the reaction (6R)-10-formyltetrahydrofolate + 5-amino-1-(5-phospho-beta-D-ribosyl)imidazole-4-carboxamide = 5-formamido-1-(5-phospho-D-ribosyl)imidazole-4-carboxamide + (6S)-5,6,7,8-tetrahydrofolate. It catalyses the reaction IMP + H2O = 5-formamido-1-(5-phospho-D-ribosyl)imidazole-4-carboxamide. Its pathway is purine metabolism; IMP biosynthesis via de novo pathway; 5-formamido-1-(5-phospho-D-ribosyl)imidazole-4-carboxamide from 5-amino-1-(5-phospho-D-ribosyl)imidazole-4-carboxamide (10-formyl THF route): step 1/1. It participates in purine metabolism; IMP biosynthesis via de novo pathway; IMP from 5-formamido-1-(5-phospho-D-ribosyl)imidazole-4-carboxamide: step 1/1. This chain is Bifunctional purine biosynthesis protein PurH, found in Psychromonas ingrahamii (strain DSM 17664 / CCUG 51855 / 37).